The sequence spans 379 residues: L-demethylnoviosyl transferase (379 aa).

The protein belongs to the glycosyltransferase 28 family.

The catalysed reaction is dTDP-4-O-demethyl-beta-L-noviose + novobiocic acid = desmethyldescarbamoylnovobiocin + dTDP + H(+). Its pathway is antibiotic biosynthesis; novobiocin biosynthesis. Its activity is regulated as follows. Inhibited by TDP-L-rhamnose, the sugar donor that most closely structurally resembles the natural substrate dTDP-beta-L-noviose. Its function is as follows. Catalyzes the transfer of L-noviose from dTDP-4-O-demethyl-beta-L-noviose to the phenolic oxygen of novobiocic acid, creating the full ABC ring system in the novobiocin biosynthesis pathway. Novobiocin is an aminocoumarin family antibiotic that targets bacterial DNA gyrases. Also shows activity with variant coumarin aglycones, suggesting it may be a promiscuous catalyst for noviosylation of a range of planar scaffolds. Does not show activity with TDP-L-rhamnose. This chain is L-demethylnoviosyl transferase (novM), found in Streptomyces niveus (Streptomyces spheroides).